The chain runs to 222 residues: MRRGAIGIGTLIVFIAMVLVAAVAAGVLISTSGYLQQRAMSVGLETTRDVSSGLRIISIWGYAPKNTTGNTTIQSNITKLAIYIAPNAGSEPINLNQTRIILTVKSTMVIFTFGGEDTVADWTNGAVNVFNETIWENINGTKFGVGVVVDSDKSMLSNKASPGMNSGDLAVLLINTKLAFNKYGGIPPNTKVVGKILPPHGAGTVIDLITPATYSSEGIELQ.

A propeptide spanning residues 1–4 (MRRG) is cleaved from the precursor.

It belongs to the archaeal flagellin family.

The protein resides in the archaeal flagellum. Functionally, flagellin is the subunit protein which polymerizes to form the filaments of archaeal flagella. The polypeptide is Flagellin B5 (flaB5) (Pyrococcus abyssi (strain GE5 / Orsay)).